Here is a 782-residue protein sequence, read N- to C-terminus: Endonuclease MutS2 (782 aa).

An ATP-binding site is contributed by 336–343; sequence GPNTGGKT. In terms of domain architecture, Smr spans 707 to 782; the sequence is LDLRGYRYEE…GFGVTVAELK (76 aa).

Belongs to the DNA mismatch repair MutS family. MutS2 subfamily. As to quaternary structure, homodimer. Binds to stalled ribosomes, contacting rRNA.

Functionally, endonuclease that is involved in the suppression of homologous recombination and thus may have a key role in the control of bacterial genetic diversity. Its function is as follows. Acts as a ribosome collision sensor, splitting the ribosome into its 2 subunits. Detects stalled/collided 70S ribosomes which it binds and splits by an ATP-hydrolysis driven conformational change. Acts upstream of the ribosome quality control system (RQC), a ribosome-associated complex that mediates the extraction of incompletely synthesized nascent chains from stalled ribosomes and their subsequent degradation. Probably generates substrates for RQC. This Staphylococcus epidermidis (strain ATCC 12228 / FDA PCI 1200) protein is Endonuclease MutS2.